A 181-amino-acid chain; its full sequence is Macro domain-containing protein in sno 5'region (181 aa).

Residues 1–172 form the Macro domain; it reads MTTITLVQGD…TFARELGDAG (172 aa).

The protein belongs to the MacroD-type family.

The protein is Macro domain-containing protein in sno 5'region of Streptomyces nogalater.